A 430-amino-acid chain; its full sequence is Adenylosuccinate synthetase (430 aa).

GTP contacts are provided by residues 13–19 (GDEGKGK) and 41–43 (GHT). Asp14 functions as the Proton acceptor in the catalytic mechanism. Residues Asp14 and Gly41 each coordinate Mg(2+). IMP-binding positions include 14–17 (DEGK), 39–42 (NAGH), Thr130, Arg144, Gln225, Thr240, and Arg304. His42 functions as the Proton donor in the catalytic mechanism. 300-306 (ASTGRPR) is a binding site for substrate. GTP-binding positions include Arg306, 332–334 (KLD), and 414–416 (STG).

This sequence belongs to the adenylosuccinate synthetase family. In terms of assembly, homodimer. Mg(2+) serves as cofactor.

The protein resides in the cytoplasm. It catalyses the reaction IMP + L-aspartate + GTP = N(6)-(1,2-dicarboxyethyl)-AMP + GDP + phosphate + 2 H(+). Its pathway is purine metabolism; AMP biosynthesis via de novo pathway; AMP from IMP: step 1/2. Its function is as follows. Plays an important role in the de novo pathway of purine nucleotide biosynthesis. Catalyzes the first committed step in the biosynthesis of AMP from IMP. This chain is Adenylosuccinate synthetase, found in Xylella fastidiosa (strain M23).